The chain runs to 151 residues: Nucleoside diphosphate kinase (151 aa).

The ATP site is built by lysine 11, phenylalanine 59, arginine 87, threonine 93, arginine 104, and asparagine 114. The active-site Pros-phosphohistidine intermediate is the histidine 117.

Belongs to the NDK family. Requires Mg(2+) as cofactor.

It carries out the reaction a 2'-deoxyribonucleoside 5'-diphosphate + ATP = a 2'-deoxyribonucleoside 5'-triphosphate + ADP. The enzyme catalyses a ribonucleoside 5'-diphosphate + ATP = a ribonucleoside 5'-triphosphate + ADP. In terms of biological role, major role in the synthesis of nucleoside triphosphates other than ATP. The ATP gamma phosphate is transferred to the NDP beta phosphate via a ping-pong mechanism, using a phosphorylated active-site intermediate. The polypeptide is Nucleoside diphosphate kinase (NDK1) (Eremothecium gossypii (strain ATCC 10895 / CBS 109.51 / FGSC 9923 / NRRL Y-1056) (Yeast)).